The primary structure comprises 129 residues: Small ribosomal subunit protein uS9 (129 aa).

The disordered stretch occupies residues 98–129 (KAQGFLTRDPRKKERKKYGRKKARKSFQFSKR). Residues 110–129 (KERKKYGRKKARKSFQFSKR) are compositionally biased toward basic residues.

It belongs to the universal ribosomal protein uS9 family.

The protein is Small ribosomal subunit protein uS9 of Chlamydia trachomatis serovar L2 (strain ATCC VR-902B / DSM 19102 / 434/Bu).